A 1381-amino-acid polypeptide reads, in one-letter code: Contactin-associated protein 1 (1381 aa).

The first 20 residues, 1 to 20 (MMSLRLFSILLAAVVSGAQG), serve as a signal peptide directing secretion. Residues 21 to 1284 (WGYYGCNEEL…PYYHDDGWIA (1264 aa)) are Extracellular-facing. The region spanning 26-169 (CNEELVGPLY…IGLRLGIYGC (144 aa)) is the F5/8 type C domain. A disulfide bridge links cysteine 26 with cysteine 169. N-linked (GlcNAc...) asparagine glycans are attached at residues asparagine 121, asparagine 129, and asparagine 277. Laminin G-like domains lie at 204-356 (FKTE…AFRC) and 390-539 (FRTW…FDTC). Residues cysteine 324 and cysteine 356 are joined by a disulfide bond. N-linked (GlcNAc...) asparagine glycosylation is found at asparagine 421, asparagine 500, and asparagine 519. Intrachain disulfides connect cysteine 507/cysteine 539, cysteine 545/cysteine 556, cysteine 550/cysteine 565, and cysteine 567/cysteine 577. An EGF-like 1 domain is found at 544 to 576 (RCSPNMCEHDGRCYQSWDDFICYCELTGYKGVT). A Fibrinogen C-terminal domain is found at 577 to 796 (CHEPLYKESC…NTISFRTGAA (220 aa)). N-linked (GlcNAc...) asparagine glycans are attached at residues asparagine 598, asparagine 654, asparagine 665, asparagine 764, asparagine 805, asparagine 844, asparagine 861, asparagine 949, and asparagine 957. Residues 814–958 (FRTSAPSGVF…NASEGTFPNC (145 aa)) form the Laminin G-like 3 domain. Intrachain disulfides connect cysteine 931–cysteine 958, cysteine 962–cysteine 975, cysteine 969–cysteine 984, and cysteine 986–cysteine 996. The EGF-like 2 domain occupies 962–996 (CTHPRFPCFHGGRCVERYSYYTCDCDLTAFDGPYC). Asparagine 1079 and asparagine 1148 each carry an N-linked (GlcNAc...) asparagine glycan. Residues 1089–1251 (FSTSSAPAVL…VQGELSESNC (163 aa)) form the Laminin G-like 4 domain. The cysteines at positions 1210 and 1251 are disulfide-linked. Residues 1285 to 1305 (ILLGFLVAFLLLGLVGMLVLF) traverse the membrane as a helical segment. At 1306-1381 (YLQNHRYKGS…PQILEESRSE (76 aa)) the chain is on the cytoplasmic side. Residues 1317–1381 (HTNEPKATHD…PQILEESRSE (65 aa)) form a disordered region. Basic and acidic residues predominate over residues 1319-1329 (NEPKATHDSHP). The short motif at 1329-1366 (PGGKAPLPPSGPAQAPAPTPAPTQVPTPAPAPASGPGP) is the SH3-binding element. A compositionally biased stretch (pro residues) spans 1334–1363 (PLPPSGPAQAPAPTPAPTQVPTPAPAPASG). Serine 1380 bears the Phosphoserine mark.

It belongs to the neurexin family. In terms of assembly, interacts with CNTN1/contactin in cis form. Predominantly expressed in brain. In myelinated nerve fibers of the CNS predominantly found in paranodal axoglial junctions. In unmyelinated nerve fibers of the CNS diffusely distributed along the entire surface. Weak expression is detected in ovary, pancreas, colon, lung, heart, intestine and testis.

It is found in the membrane. The protein localises to the cell junction. It localises to the paranodal septate junction. In terms of biological role, required, with CNTNAP2, for radial and longitudinal organization of myelinated axons. Plays a role in the formation of functional distinct domains critical for saltatory conduction of nerve impulses in myelinated nerve fibers. Demarcates the paranodal region of the axo-glial junction. In association with contactin involved in the signaling between axons and myelinating glial cells. The sequence is that of Contactin-associated protein 1 (Cntnap1) from Rattus norvegicus (Rat).